A 194-amino-acid chain; its full sequence is MAAADESSWPADVVEVAKVIDAWGVKGWFRVHPYAADAQAVFTSRRWYLQGPDNRPRPKDAPALPRLLHVTEVKEHGDGIVACAPEVADRSAAEALKGARIFVSRASFPTVGDGEYYWIDLIGLSVVNRDGESLGTVTDLIDTGPHSVLRLGYPSVDDKGAPVEGERLIPFVAAYIDSVQLDQKRIVADWGLDY.

The 82-residue stretch at 113-194 (DGEYYWIDLI…RIVADWGLDY (82 aa)) folds into the PRC barrel domain.

The protein belongs to the RimM family. Binds ribosomal protein uS19.

Its subcellular location is the cytoplasm. Functionally, an accessory protein needed during the final step in the assembly of 30S ribosomal subunit, possibly for assembly of the head region. Essential for efficient processing of 16S rRNA. May be needed both before and after RbfA during the maturation of 16S rRNA. It has affinity for free ribosomal 30S subunits but not for 70S ribosomes. The sequence is that of Ribosome maturation factor RimM from Leptothrix cholodnii (strain ATCC 51168 / LMG 8142 / SP-6) (Leptothrix discophora (strain SP-6)).